Reading from the N-terminus, the 401-residue chain is Deacetoxyvindoline 4-hydroxylase (401 aa).

The region spanning 242 to 345 is the Fe2OG dioxygenase domain; that stretch reads CAEGLILLGH…SVAVAFGIKT (104 aa). His-268, Asp-270, and His-324 together coordinate Fe cation. Arg-334 contributes to the 2-oxoglutarate binding site.

Belongs to the iron/ascorbate-dependent oxidoreductase family. Monomer. Fe cation serves as cofactor. L-ascorbate is required as a cofactor. In terms of tissue distribution, highest levels in leaves, lower levels in stems and fruits. Not expressed in flowers and roots.

It is found in the cytoplasm. The protein resides in the nucleus. The catalysed reaction is deacetoxyvindoline + 2-oxoglutarate + O2 = 4-O-deacetylvindoline + succinate + CO2. It functions in the pathway alkaloid biosynthesis; vindoline biosynthesis. Its function is as follows. Catalyzes the C4-hydroxylation of desacetoxyvindoline. The sequence is that of Deacetoxyvindoline 4-hydroxylase from Catharanthus roseus (Madagascar periwinkle).